Consider the following 953-residue polypeptide: Catenin alpha-2 (953 aa).

At T632 the chain carries Phosphothreonine. A phosphoserine mark is found at S640, S651, and S901. Residues 912–927 (EKKPLVKREKPEEFQT) are compositionally biased toward basic and acidic residues. Residues 912-939 (EKKPLVKREKPEEFQTRVRRGSQKKHIS) form a disordered region. Over residues 928 to 938 (RVRRGSQKKHI) the composition is skewed to basic residues. The residue at position 939 (S939) is a Phosphoserine.

This sequence belongs to the vinculin/alpha-catenin family. Interacts with CDH1 and CDH2. Interacts with ZNF639; recruits CTNNA2 to the nucleus. Interacts with F-actin. In terms of tissue distribution, expressed in neural tissues, with strongest expression in fetal and adult brain. Expressed in the developing cortical plate and marginal zone of 20-week-old human fetal brain.

It is found in the cell membrane. Its subcellular location is the cytoplasm. The protein resides in the cytoskeleton. The protein localises to the cell junction. It localises to the adherens junction. It is found in the cell projection. Its subcellular location is the axon. The protein resides in the nucleus. May function as a linker between cadherin adhesion receptors and the cytoskeleton to regulate cell-cell adhesion and differentiation in the nervous system. Required for proper regulation of cortical neuronal migration and neurite growth. It acts as a negative regulator of Arp2/3 complex activity and Arp2/3-mediated actin polymerization. It thereby suppresses excessive actin branching which would impair neurite growth and stability. Regulates morphological plasticity of synapses and cerebellar and hippocampal lamination during development. Functions in the control of startle modulation. The polypeptide is Catenin alpha-2 (CTNNA2) (Homo sapiens (Human)).